A 580-amino-acid chain; its full sequence is Arginine--tRNA ligase (580 aa).

Positions 127–137 (PNTHKELHVGH) match the 'HIGH' region motif.

It belongs to the class-I aminoacyl-tRNA synthetase family. Monomer.

It localises to the cytoplasm. The catalysed reaction is tRNA(Arg) + L-arginine + ATP = L-arginyl-tRNA(Arg) + AMP + diphosphate. This chain is Arginine--tRNA ligase, found in Bdellovibrio bacteriovorus (strain ATCC 15356 / DSM 50701 / NCIMB 9529 / HD100).